Here is a 964-residue protein sequence, read N- to C-terminus: Pumilio homolog 3 (964 aa).

The segment at 1–22 (MMIPELGRRPMHRGNEDSSFGD) is disordered. At serine 192 the chain carries Phosphoserine. Disordered regions lie at residues 204–235 (PVVQQPSRPASRNTFDENVDSNNNLSPSASQG), 256–300 (GTPD…TSGL), and 343–388 (DGHN…VANP). 2 stretches are compositionally biased toward polar residues: residues 207–216 (QQPSRPASRN) and 223–234 (DSNNNLSPSASQ). A Phosphothreonine modification is found at threonine 257. Composition is skewed to polar residues over residues 287–300 (TSNQSPFNGVTSGL) and 356–384 (RSDQARGTASCRNSQMRGSQGSAYNSGSG). The region spanning 606 to 946 (FGSSMLEEFK…HIVARVEKLV (341 aa)) is the PUM-HD domain. 8 Pumilio repeats span residues 626 to 661 (EIAGHVVEFSSDQYGSRFIQQKLETATTDEKNMVYE), 662 to 697 (EIMPKALALMTDVFGNYVIQKFFEHGLPPQRRELGE), 698 to 733 (KLIDNVLPLSLQMYGCRVIQKAIEVVDLDQKIQMVK), 734 to 769 (ELDGHVMRCVRDQNGNHVVQKCIECVPEENIEFIIS), 770 to 806 (TFFGHVVTLSTHPYGCRVIQRVLEHCHNPDTQSKVME), 807 to 842 (EILSTVSMLTQDQYGNYVVQHVLEHGKPDERTVIIK), 843 to 878 (ELAGKIVQMSQQKFASNVVEKCLTFGGPEERELLVN), and 879 to 920 (EMLG…LILT).

The protein resides in the cytoplasm. Functionally, sequence-specific RNA-binding protein that regulates translation and mRNA stability by binding the 3'-UTR of target mRNAs. Binds the APUM-binding elements (APBEs) in the 3'-UTR mRNA sequence of CLV1, PNH, WUS and FAS2. The chain is Pumilio homolog 3 (APUM3) from Arabidopsis thaliana (Mouse-ear cress).